Here is a 263-residue protein sequence, read N- to C-terminus: Small ribosomal subunit protein uS2 (263 aa).

This sequence belongs to the universal ribosomal protein uS2 family. As to quaternary structure, component of the small ribosomal subunit. Mature ribosomes consist of a small (40S) and a large (60S) subunit. The 40S subunit contains about 33 different proteins and 1 molecule of RNA (18S). The 60S subunit contains about 49 different proteins and 3 molecules of RNA (25S, 5.8S and 5S). Interacts with RPS21.

The protein localises to the cytoplasm. Its function is as follows. Required for the assembly and/or stability of the 40S ribosomal subunit. Required for the processing of the 20S rRNA-precursor to mature 18S rRNA in a late step of the maturation of 40S ribosomal subunits. The polypeptide is Small ribosomal subunit protein uS2 (Vairimorpha ceranae (strain BRL01) (Microsporidian parasite)).